The sequence spans 643 residues: 1-deoxy-D-xylulose-5-phosphate synthase (643 aa).

Residues H78 and 119-121 (AHS) each bind thiamine diphosphate. D150 lines the Mg(2+) pocket. Thiamine diphosphate is bound by residues 151–152 (GS), N179, Y288, and E370. Residue N179 coordinates Mg(2+).

Belongs to the transketolase family. DXPS subfamily. Homodimer. Requires Mg(2+) as cofactor. It depends on thiamine diphosphate as a cofactor.

It catalyses the reaction D-glyceraldehyde 3-phosphate + pyruvate + H(+) = 1-deoxy-D-xylulose 5-phosphate + CO2. Its pathway is metabolic intermediate biosynthesis; 1-deoxy-D-xylulose 5-phosphate biosynthesis; 1-deoxy-D-xylulose 5-phosphate from D-glyceraldehyde 3-phosphate and pyruvate: step 1/1. Functionally, catalyzes the acyloin condensation reaction between C atoms 2 and 3 of pyruvate and glyceraldehyde 3-phosphate to yield 1-deoxy-D-xylulose-5-phosphate (DXP). The polypeptide is 1-deoxy-D-xylulose-5-phosphate synthase (Brucella ovis (strain ATCC 25840 / 63/290 / NCTC 10512)).